The following is a 92-amino-acid chain: Small ribosomal subunit protein uS19c (92 aa).

The protein belongs to the universal ribosomal protein uS19 family.

Its subcellular location is the plastid. Protein S19 forms a complex with S13 that binds strongly to the 16S ribosomal RNA. This chain is Small ribosomal subunit protein uS19c, found in Cuscuta exaltata (Tall dodder).